The following is a 766-amino-acid chain: Slit homolog 2 protein (766 aa).

The N-terminal stretch at 1 to 30 is a signal peptide; sequence MSGIGWQTLSLSLALVLSILNKVAPHACPA. In terms of domain architecture, LRRNT spans 31–55; that stretch reads QCSCSGSTVDCHGLALRIVPRNIPR. 6 LRR repeats span residues 56–77, 80–101, 104–125, 128–149, 152–173, and 176–197; these read NTERLDLNGNNITRITKTDFAG, HLRILQLMENKISTIERGAFHD, ELERLRLNRNNLQLFPELLFLG, KLYRLDLSENQIQAIPRKAFRG, DIKNLQLDYNQISCIEDGAFRA, and DLEVLTLNNNNITRLSVASFNH. Asn-66 is a glycosylation site (N-linked (GlcNAc...) asparagine). N-linked (GlcNAc...) asparagine glycosylation occurs at Asn-186. The LRRCT 1 domain occupies 209–259; sequence NNLYCDCHLAWLSDWLRQRPRVGLYTQCMGPSHLRGHNVAEVQKREFVCSD. The LRRNT 2 domain maps to 268–304; the sequence is MAPSCSVLHCPIACTCSNNIVDCRGKGLTEIPTNLPE. Residues Cys-281 and Cys-290 are joined by a disulfide bond. LRR repeat units follow at residues 305-326, 329-350, 353-374, 377-398, and 401-422; these read TITEIRLEQNSIRVIPPGAFSP, KLRRLDLSNNQISELAPDAFQG, SLNSLVLYGNKITELPKSLFEG, SLQLLLLNANKINCLRVDAFQD, and NLNLLSLYDNKLQTVAKGTFSA. In terms of domain architecture, LRRCT 2 spans 434-484; the sequence is NPFICDCHLKWLADYLHTNPIETSGARCTSPRRLANKRIGQIKSKKFRCSG. 4 disulfide bridges follow: Cys-438–Cys-461, Cys-440–Cys-482, Cys-502–Cys-508, and Cys-506–Cys-515. Residues 493-529 enclose the LRRNT 3 domain; it reads SGDCFADLACPEKCRCEGTTVDCSNQKLNKIPDHIPQ. 5 LRR repeats span residues 530–551, 555–576, 579–600, 603–624, and 627–648; these read YTAELRLNNNEFTVLEATGIFK, QLRKINLSNNKITDIEEGAFEG, GVNEILLTSNRLENVQHKMFKG, SLKTLMLRSNRISCVGNDSFTG, and SVRLLSLYDNQITTVAPGAFGT. A glycan (N-linked (GlcNAc...) asparagine) is linked at Asn-560. Residue Asn-619 is glycosylated (N-linked (GlcNAc...) asparagine). The LRRCT 3 domain maps to 660 to 710; the sequence is NPFNCNCHLAWLGEWLRRKRIVTGNPRCQKPYFLKEIPIQDVAIQDFTCDD. 4 disulfide bridges follow: Cys-664–Cys-687, Cys-666–Cys-708, Cys-723–Cys-729, and Cys-727–Cys-736. In terms of domain architecture, LRRNT 4 spans 714–750; it reads DNSCSPLSRCPSECTCLDTVVRCSNKGLKVLPKGIPR.

Homodimer. Binds ROBO1 and ROBO2 with high affinity. Interacts with GREM1.

Its subcellular location is the secreted. In terms of biological role, thought to act as molecular guidance cue in cellular migration, and function appears to be mediated by interaction with roundabout homolog receptors. During neural development involved in axonal navigation at the ventral midline of the neural tube and projection of axons to different regions. SLIT1 and SLIT2 seem to be essential for midline guidance in the forebrain by acting as repulsive signal preventing inappropriate midline crossing by axons projecting from the olfactory bulb. In spinal cord development may play a role in guiding commissural axons once they reached the floor plate by modulating the response to netrin. In vitro, silences the attractive effect of NTN1 but not its growth-stimulatory effect and silencing requires the formation of a ROBO1-DCC complex. May be implicated in spinal cord midline post-crossing axon repulsion. In vitro, only commissural axons that crossed the midline responded to SLIT2. In the developing visual system appears to function as repellent for retinal ganglion axons by providing a repulsion that directs these axons along their appropriate paths prior to, and after passage through, the optic chiasm. In vitro, collapses and repels retinal ganglion cell growth cones. Seems to play a role in branching and arborization of CNS sensory axons, and in neuronal cell migration. Seems to be involved in regulating leukocyte migration. This Rattus norvegicus (Rat) protein is Slit homolog 2 protein (Slit2).